A 237-amino-acid polypeptide reads, in one-letter code: Ditrans,polycis-undecaprenyl-diphosphate synthase ((2E,6E)-farnesyl-diphosphate specific) (237 aa).

Asp11 is an active-site residue. Asp11 provides a ligand contact to Mg(2+). Residues 12–15 (GNGR), Trp16, Arg24, His28, and 56–58 (SIE) contribute to the substrate site. Asn59 acts as the Proton acceptor in catalysis. Residues Arg62, Arg179, and 185-187 (RLS) each bind substrate. A Mg(2+)-binding site is contributed by Glu198.

It belongs to the UPP synthase family. Homodimer. Requires Mg(2+) as cofactor.

It catalyses the reaction 8 isopentenyl diphosphate + (2E,6E)-farnesyl diphosphate = di-trans,octa-cis-undecaprenyl diphosphate + 8 diphosphate. Functionally, catalyzes the sequential condensation of isopentenyl diphosphate (IPP) with (2E,6E)-farnesyl diphosphate (E,E-FPP) to yield (2Z,6Z,10Z,14Z,18Z,22Z,26Z,30Z,34E,38E)-undecaprenyl diphosphate (di-trans,octa-cis-UPP). UPP is the precursor of glycosyl carrier lipid in the biosynthesis of bacterial cell wall polysaccharide components such as peptidoglycan and lipopolysaccharide. The chain is Ditrans,polycis-undecaprenyl-diphosphate synthase ((2E,6E)-farnesyl-diphosphate specific) from Coxiella burnetii (strain RSA 493 / Nine Mile phase I).